The sequence spans 211 residues: tRNA (guanine-N(7)-)-methyltransferase (211 aa).

Positions 44, 69, 96, and 118 each coordinate S-adenosyl-L-methionine. Asp-118 is an active-site residue. Substrate is bound at residue Lys-122. Residues 124–129 (RHEKRR) are interaction with RNA. Substrate-binding positions include Asp-154 and 191 to 194 (TEYE).

This sequence belongs to the class I-like SAM-binding methyltransferase superfamily. TrmB family.

The catalysed reaction is guanosine(46) in tRNA + S-adenosyl-L-methionine = N(7)-methylguanosine(46) in tRNA + S-adenosyl-L-homocysteine. Its pathway is tRNA modification; N(7)-methylguanine-tRNA biosynthesis. Its function is as follows. Catalyzes the formation of N(7)-methylguanine at position 46 (m7G46) in tRNA. In Streptococcus equi subsp. zooepidemicus (strain H70), this protein is tRNA (guanine-N(7)-)-methyltransferase.